A 1342-amino-acid chain; its full sequence is Cytokinesis protein sepH (1342 aa).

The segment covering 1-10 (MVSRSSEGAE) has biased composition (low complexity). A disordered region spans residues 1–47 (MVSRSSEGAEGPPPSAPKPPNTPAKSRLSRLGSSPSKREDKSRDDRM). Residues 11–22 (GPPPSAPKPPNT) are compositionally biased toward pro residues. Residues 36–47 (SKREDKSRDDRM) are compositionally biased toward basic and acidic residues. In terms of domain architecture, Protein kinase spans 61–308 (YQLGDCLGKG…ARKLLKHPWI (248 aa)). ATP-binding positions include 67-75 (LGKGAFGSV) and lysine 90. The Proton acceptor role is filled by aspartate 180. 3 disordered regions span residues 336-396 (NEAL…EEDN), 441-486 (IKSD…QLQE), and 552-591 (ADEN…ISVK). The span at 369–379 (KDTLPSPVSRN) shows a compositional bias: polar residues. The stretch at 658-695 (FAQLEEGLDEMDLEANIARDKHARLRNQVEGLVSSLKT) forms a coiled coil. Residues 1201-1342 (SEAYGMGKRK…QTQADADWTP (142 aa)) form a disordered region. Residues 1207–1217 (GKRKPMVRRRS) show a composition bias toward basic residues. 2 stretches are compositionally biased toward polar residues: residues 1218–1244 (TSAT…SQSK) and 1273–1290 (DGST…TGAS). Residues 1315-1324 (RPSSSLSRRQ) show a composition bias toward low complexity.

This sequence belongs to the protein kinase superfamily. Ser/Thr protein kinase family. CDC7 subfamily. Mg(2+) serves as cofactor.

The catalysed reaction is L-seryl-[protein] + ATP = O-phospho-L-seryl-[protein] + ADP + H(+). It carries out the reaction L-threonyl-[protein] + ATP = O-phospho-L-threonyl-[protein] + ADP + H(+). In terms of biological role, required for early events during cytokinesis including localization of cytoskeletal components to the cytokinetic ring. This chain is Cytokinesis protein sepH, found in Aspergillus terreus (strain NIH 2624 / FGSC A1156).